A 188-amino-acid chain; its full sequence is Peptidyl-tRNA hydrolase (188 aa).

Tyr17 is a binding site for tRNA. His22 functions as the Proton acceptor in the catalytic mechanism. TRNA is bound by residues Tyr65, Asn67, and Asn113.

The protein belongs to the PTH family. As to quaternary structure, monomer.

The protein localises to the cytoplasm. It catalyses the reaction an N-acyl-L-alpha-aminoacyl-tRNA + H2O = an N-acyl-L-amino acid + a tRNA + H(+). Functionally, hydrolyzes ribosome-free peptidyl-tRNAs (with 1 or more amino acids incorporated), which drop off the ribosome during protein synthesis, or as a result of ribosome stalling. Its function is as follows. Catalyzes the release of premature peptidyl moieties from peptidyl-tRNA molecules trapped in stalled 50S ribosomal subunits, and thus maintains levels of free tRNAs and 50S ribosomes. This chain is Peptidyl-tRNA hydrolase, found in Mycoplasma pneumoniae (strain ATCC 29342 / M129 / Subtype 1) (Mycoplasmoides pneumoniae).